The sequence spans 108 residues: uncharacterized protein (108 aa).

Helical transmembrane passes span 5–27 (TVYG…QLEI) and 83–105 (IFLM…LNIF).

It is found in the membrane. This is an uncharacterized protein from Schizosaccharomyces pombe (strain 972 / ATCC 24843) (Fission yeast).